We begin with the raw amino-acid sequence, 303 residues long: MYYGFDVGGTKIEFGAFNEKLERVATERVATPRDDYDKLVDTIVGIIQKADNDLGCEGLVGIGLPGMEDARDGSVLTSNIPAAKGRFLRKDLEAKLGRTVTIDNDANCFALSEAWDESLQGEKSVLGLILGTGFGGGLVFDGHVFSGMNHVAGELGHTRMPIDAWFSLGEKAPLFTCGCDNKGCIDNYLSGRGFEQLYAHYYGENLKAIEIIKLHATGEAKAVEHVDRFMEMLAICLANIFTGLDPHVVVLGGGLSNFELLYQELPKRIAKHLLSVAQVPKIVKAKHGDAGGVRGAAFLNIKK.

ATP is bound by residues 4–11 and 133–140; these read GFDVGGTK and GFGGGLVF. Residues His-157, Cys-177, Cys-179, and Cys-184 each coordinate Zn(2+).

This sequence belongs to the ROK (NagC/XylR) family. NagK subfamily.

The catalysed reaction is N-acetyl-D-glucosamine + ATP = N-acetyl-D-glucosamine 6-phosphate + ADP + H(+). Its pathway is cell wall biogenesis; peptidoglycan recycling. Catalyzes the phosphorylation of N-acetyl-D-glucosamine (GlcNAc) derived from cell-wall degradation, yielding GlcNAc-6-P. This Photobacterium profundum (strain SS9) protein is N-acetyl-D-glucosamine kinase.